The chain runs to 2449 residues: Nonribisomal peptide synthetase phqB (2449 aa).

Residues 253-654 (IQVHSGPGRL…GRRDTVVKIR (402 aa)) form an adenylation 1 region. The 76-residue stretch at 795–870 (LPMTPNEDVL…LRTVAKEARP (76 aa)) folds into the Carrier 1 domain. An O-(pantetheine 4'-phosphoryl)serine modification is found at serine 815. The interval 913-1337 (QDIYPTTPLQ…LISDRDSELL (425 aa)) is condensation 1. Residues 1357–1756 (EAQVTRNPSK…TFTFLGRTNQ (400 aa)) are adenylation 2. The region spanning 1915–1993 (WALSKHIGQL…MVAEMIDRTP (79 aa)) is the Carrier 2 domain. At serine 1952 the chain carries O-(pantetheine 4'-phosphoryl)serine. The segment at 2041–2297 (LTGATGFLGT…VAAVDWVASL (257 aa)) is reductase (R) domain. NADPH is bound by residues threonine 2045, methionine 2249, and asparagine 2259.

It belongs to the NRP synthetase family.

Its pathway is alkaloid biosynthesis. Nonribisomal peptide synthetase; part of the gene cluster that mediates the biosynthesis of paraherquamide, a fungal indole alkaloid that belongs to a family of natural products containing a characteristic bicyclo[2.2.2]diazaoctane core. The first steps in the biosynthesis of paraherquamide is the production of the beta-methyl-proline precursor from L-isoleucine. They require oxidation of a terminally hydroxylated L-isoleucine to the corresponding aldehyde by enzymes which have still to be identified. Spontaneous cyclization and dehydration would yield the 4-methyl pyrolline-5-carboxylic acid, which is then reduced by the pyrroline-5-carboxylate reductase phqD leading to the beta-methyl-proline precursor. The next step of paraherquamide biosynthesis involves coupling of beta-methyl-proline and L-tryptophan by the bimodular NRPS phqB, to produce a monooxopiperazine intermediate. The reductase (R) domain of phqB utilizes NADPH for hydride transfer to reduce the thioester bond of the T domain-tethered linear dipeptide to a hemithioaminal intermediate, which spontaneously cleaves the C-S bond to release the aldehyde product. This compound undergoes spontaneous cyclization and dehydration to give a dienamine which is reverse prenylated at C-2 by the reverse prenyltransferase phqJ. The other prenyltransferase present in the cluster, phqI may be a redundant gene in the pathway. During biosynthetic assembly, the key step to produce the polycyclic core is catalyzed by the bifunctional reductase and intramolecular [4+2] Diels-Alderase, phqE, resulting in formation of the [2.2.2] diazaoctane intermediate preparaherquamide. Following formation of preparaherquamide, an indole 2,3-epoxidation-initiated pinacol-like rearrangement is catalyzed by the phqK FAD-dependent monooxygenase. The prenyltransferase phqA, the cytochrome P450 monooxygenase phqL, and the FAD-linked oxidoreductase phqH (or the cytochrome P450 monooxygenase phqM), are proposed to be involved in the formation of the pyran ring. The FAD-dependent monooxygenase phqK is likely responsible for generation of the spiro-oxindole, and the N-methylation is likely mediated by the phqN methyltransferase leading to the isolable natural product paraherquamide F. However, the order of these biosynthetic steps has still to be determined. In late-stage paraherquamide biosynthesis, the third P450 monooxygenase, phqO, is probably responsible for the C-14 hydroxylation, transforming paraherquamide F to paraherquamide G, and paraherquamide E to the final product paraherquamide A. The expansion from the 6-membered ring pyran (in paraherquamides F and G) to the 7-membered dioxepin ring (in paraherquamides A and E) represents a poorly understood but intriguing process that probably involves the 2-oxoglutarate-dependent dioxygenase phqC. Finally, the remaining members of the paraherquamide cluster, including phqI as well as phqM (or phqH), do not have a clearly prescribed role and appear to be redundant. This chain is Nonribisomal peptide synthetase phqB, found in Penicillium fellutanum.